The following is a 744-amino-acid chain: Merozoite surface protein 9 (744 aa).

The N-terminal stretch at 1-23 (MMNMKIVLFSLLLFVIRWNIISC) is a signal peptide. Residues 77–235 (KELLKEKQYT…VNDEDDVNDE (159 aa)) form an interaction with MSP1 and host SLC4A1/Band 3 region. 4 disordered regions span residues 202 to 282 (KSQG…ATAY), 459 to 487 (DNQAVDTKSMEEPKVKAQPALRGVEPTED), 512 to 540 (NNTPNVVPPTQSKKKNKNETVSGMDENFD), and 666 to 744 (VDAL…EESK). The span at 211–224 (SQNQNENNDNQKYQ) shows a compositional bias: polar residues. Repeat copies occupy residues 226–231 (VNDEDD), 232–237 (VNDEED), 238–243 (TNDDED), 244–249 (TNDEED), 250–255 (TNDDED), 256–261 (TNDDED), 262–267 (TNDEED), and 268–273 (TNDEED). Residues 226-273 (VNDEDDVNDEEDTNDDEDTNDEEDTNDDEDTNDDEDTNDEEDTNDEED) are 8 X 6 AA tandem repeats of [VT]-N-D-[ED]-[ED]-D. Acidic residues predominate over residues 226–274 (VNDEDDVNDEEDTNDDEDTNDEEDTNDDEDTNDDEDTNDEEDTNDEEDH). Residues 364-528 (LKDNLINYEF…PPTQSKKKNK (165 aa)) form an interaction with MSP1 and host SLC4A1/Band 3 region. Over residues 459–473 (DNQAVDTKSMEEPKV) the composition is skewed to basic and acidic residues. Residues 512-521 (NNTPNVVPPT) show a composition bias toward low complexity. Positions 644–734 (NQETEEEMEK…QEEEEEEEIV (91 aa)) form a coiled coil. Composition is skewed to basic and acidic residues over residues 672 to 698 (KNKEEEEKEKEKEKEKEEKEKEEKEKE) and 706 to 719 (EKEKEKEEKEKEEK). Positions 720-734 (EKEEEQEEEEEEEIV) are enriched in acidic residues.

The protein belongs to the plasmodium ABRA family. As to quaternary structure, forms a complex composed of MSP1, MSP6, MSP7, MSP9 and MSP3; within the complex, MSP6 and MSP9 mediate the binding to the host erythrocyte. Interacts with MSP1 subunits p19 and p42; the interaction is direct. Interacts with host SLC4A1/Band 3 protein (via the 5ABC region). MSP1 subunits p19 or p42, and MSP9 form a co-ligand complex that interacts with host SLC4A1/Band 3 protein. In terms of processing, not glycosylated.

It is found in the cell membrane. It localises to the parasitophorous vacuole lumen. The protein resides in the secreted. Functionally, during the asexual blood stage, involved in the sialic acid-independent (SAID) merozoite invasion of host erythrocytes by binding to host SLC4A1/Band 3 protein on the surface of the host erythrocyte. This Plasmodium falciparum (isolate 7G8) protein is Merozoite surface protein 9.